A 231-amino-acid chain; its full sequence is Putative cobalt transport protein CbiM 2 (231 aa).

Helical transmembrane passes span Leu8–Ile28, Val41–Pro61, Leu75–Phe95, Leu108–Val128, Val136–Val156, and Ile176–Ile196.

It belongs to the CbiM family. Forms an energy-coupling factor (ECF) transporter complex composed of an ATP-binding protein (A component, CbiO), a transmembrane protein (T component, CbiQ) and 2 possible substrate-capture proteins (S components, CbiM and CbiN) of unknown stoichimetry.

It localises to the cell membrane. Its pathway is cofactor biosynthesis; adenosylcobalamin biosynthesis. In terms of biological role, part of the energy-coupling factor (ECF) transporter complex CbiMNOQ involved in cobalt import. In Methanocorpusculum labreanum (strain ATCC 43576 / DSM 4855 / Z), this protein is Putative cobalt transport protein CbiM 2.